We begin with the raw amino-acid sequence, 391 residues long: MAEKIVMKNGQLQVSDRPIIPFIEGDGVGHDIWKNAQAIFDKAVEVAYEGKRHIEWQELLAGKKAYDKTGEWLPKETLEAIRESLVAIKGPLETPVGGGIRSLNVALRQELDLYACVRPVRYFDGVASPLKEPEKTNITIFRENTEDIYAGIEWEAGTADVKRVIEFLQTEMNVNKIRFPESSSIGIKPISIEGSKRLIRSAIDYALKNNLKKVTLVHKGNIQKFTEGGFRKWGYEVAQEDYKEELLAGRLEINDIIADNFLQQILLNPEKFDVVALTNLNGDYASDALAAQVGGIGISPGANINYQTGHAIFEATHGTAPDIADQDKANPCSVLLSGCMLLDYIGWTEAAQLITSAIEKTFKADIFTADLAFGKQAYSTSAFSNQILSIM.

The D-threo-isocitrate site is built by Ser-102, Asn-104, Arg-108, Arg-118, and Arg-142. Asp-283 contributes to the Mg(2+) binding site.

This sequence belongs to the isocitrate and isopropylmalate dehydrogenases family. As to quaternary structure, homodimer. The cofactor is Mg(2+). Mn(2+) is required as a cofactor.

The catalysed reaction is D-threo-isocitrate + NADP(+) = 2-oxoglutarate + CO2 + NADPH. Its function is as follows. Catalyzes the oxidative decarboxylation of isocitrate to 2-oxoglutarate and carbon dioxide with the concomitant reduction of NADP(+). This Streptococcus salivarius protein is Isocitrate dehydrogenase [NADP] (icd).